The following is a 394-amino-acid chain: UPF0284 protein SYNW1869 (394 aa).

Belongs to the UPF0284 family.

In Parasynechococcus marenigrum (strain WH8102), this protein is UPF0284 protein SYNW1869.